The chain runs to 374 residues: Ribosomal RNA large subunit methyltransferase G (374 aa).

Belongs to the methyltransferase superfamily. RlmG family.

Its subcellular location is the cytoplasm. The catalysed reaction is guanosine(1835) in 23S rRNA + S-adenosyl-L-methionine = N(2)-methylguanosine(1835) in 23S rRNA + S-adenosyl-L-homocysteine + H(+). Functionally, specifically methylates the guanine in position 1835 (m2G1835) of 23S rRNA. The sequence is that of Ribosomal RNA large subunit methyltransferase G from Pseudomonas entomophila (strain L48).